Here is a 607-residue protein sequence, read N- to C-terminus: 2-isopropylmalate synthase (607 aa).

Residues 1–10 (MASFSESLSQ) show a composition bias toward polar residues. Residues 1–40 (MASFSESLSQDPADAYKSAPSITKPMGPPSPGQPQWNPQR) form a disordered region. A Pyruvate carboxyltransferase domain is found at 75-349 (PLWCAVDLRD…DPQIDFSNID (275 aa)). The Mg(2+) site is built by aspartate 84, histidine 288, histidine 290, and asparagine 324. The interval 491-607 (PVQPLERIKQ…VSAVNRAMPR (117 aa)) is regulatory domain.

The protein belongs to the alpha-IPM synthase/homocitrate synthase family. LeuA type 2 subfamily. As to quaternary structure, homodimer. It depends on Mg(2+) as a cofactor.

It localises to the cytoplasm. It carries out the reaction 3-methyl-2-oxobutanoate + acetyl-CoA + H2O = (2S)-2-isopropylmalate + CoA + H(+). The protein operates within amino-acid biosynthesis; L-leucine biosynthesis; L-leucine from 3-methyl-2-oxobutanoate: step 1/4. Functionally, catalyzes the condensation of the acetyl group of acetyl-CoA with 3-methyl-2-oxobutanoate (2-ketoisovalerate) to form 3-carboxy-3-hydroxy-4-methylpentanoate (2-isopropylmalate). This chain is 2-isopropylmalate synthase, found in Mycobacterium leprae (strain TN).